A 72-amino-acid polypeptide reads, in one-letter code: Translational regulator CsrA (72 aa).

This sequence belongs to the CsrA/RsmA family. Homodimer; the beta-strands of each monomer intercalate to form a hydrophobic core, while the alpha-helices form wings that extend away from the core.

It localises to the cytoplasm. Its function is as follows. A translational regulator that binds mRNA to regulate translation initiation and/or mRNA stability. Usually binds in the 5'-UTR at or near the Shine-Dalgarno sequence preventing ribosome-binding, thus repressing translation. Its main target seems to be the major flagellin gene, while its function is anatagonized by FliW. This Clostridium botulinum (strain Loch Maree / Type A3) protein is Translational regulator CsrA.